The primary structure comprises 545 residues: Sulfite oxidase, mitochondrial (545 aa).

The transit peptide at 1 to 79 directs the protein to the mitochondrion; that stretch reads MLLLHRAVVL…YQDHRCRAAQ (79 aa). The region spanning 82 to 161 is the Cytochrome b5 heme-binding domain; that stretch reads THIYTKEEVS…LAQYKIGELN (80 aa). Position 118 (His-118) interacts with heme b. Position 123 is a phosphoserine (Ser-123). Heme b-binding residues include His-143, Gln-145, and His-147. The segment at 165–174 is hinge; that stretch reads KVAPTVETSD. The tract at residues 175-401 is moco domain; it reads PYADDPVRHP…YSHWQRRDYK (227 aa). Mo-molybdopterin is bound by residues 215–219, Cys-264, Asp-322, His-361, Arg-366, and 377–379; these read FTRNH and HVK. The homodimerization stretch occupies residues 402–538; the sequence is GFSPSVDWET…RGVLSNAWHR (137 aa).

In terms of assembly, homodimer. Heme b serves as cofactor. It depends on Mo-molybdopterin as a cofactor.

It localises to the mitochondrion intermembrane space. The enzyme catalyses sulfite + O2 + H2O = sulfate + H2O2. The protein operates within energy metabolism; sulfur metabolism. Its function is as follows. Catalyzes the oxidation of sulfite to sulfate, the terminal reaction in the oxidative degradation of sulfur-containing amino acids. This is Sulfite oxidase, mitochondrial (SUOX) from Homo sapiens (Human).